The sequence spans 542 residues: Chaperonin GroEL (542 aa).

Residues threonine 29–proline 32, aspartate 86–threonine 90, glycine 413, asparagine 476–alanine 478, and aspartate 492 each bind ATP.

The protein belongs to the chaperonin (HSP60) family. Forms a cylinder of 14 subunits composed of two heptameric rings stacked back-to-back. Interacts with the co-chaperonin GroES.

It is found in the cytoplasm. It carries out the reaction ATP + H2O + a folded polypeptide = ADP + phosphate + an unfolded polypeptide.. Its function is as follows. Together with its co-chaperonin GroES, plays an essential role in assisting protein folding. The GroEL-GroES system forms a nano-cage that allows encapsulation of the non-native substrate proteins and provides a physical environment optimized to promote and accelerate protein folding. This is Chaperonin GroEL from Bacillus cytotoxicus (strain DSM 22905 / CIP 110041 / 391-98 / NVH 391-98).